Reading from the N-terminus, the 114-residue chain is Iron-sulfur cluster insertion protein ErpA (114 aa).

Iron-sulfur cluster contacts are provided by Cys-42, Cys-106, and Cys-108.

It belongs to the HesB/IscA family. Homodimer. Iron-sulfur cluster is required as a cofactor.

In terms of biological role, required for insertion of 4Fe-4S clusters for at least IspG. In Edwardsiella ictaluri (strain 93-146), this protein is Iron-sulfur cluster insertion protein ErpA.